The primary structure comprises 1080 residues: AP-4 complex subunit epsilon (1080 aa).

5 HEAT repeats span residues 161–198 (DTIP…LVGD), 201–238 (LDDD…KHST), 369–405 (QLIE…KVSP), 406–443 (KLVL…QTNV), and 445–479 (PVCS…KYSP). Disordered regions lie at residues 711–782 (TPLV…FPQQ), 801–920 (NNNS…NIDP), 933–973 (FSEN…INNN), and 996–1027 (TNNS…NNNL). Low complexity-rich tracts occupy residues 762–782 (QQQQ…FPQQ), 801–847 (NNNS…PNNQ), 878–911 (NKQT…IQKH), 936–952 (NNNR…NQNN), and 962–972 (KKSNNENNINN).

This sequence belongs to the adaptor complexes large subunit family. In terms of assembly, may be part of the adaptor protein complex 4 (AP-4), a heterotetramer composed of two large adaptins (epsilon-type subunitand beta-type subunit), a medium adaptin (mu-type subunit) and a small adaptin (sigma-type).

It is found in the golgi apparatus. The protein localises to the trans-Golgi network membrane. Probable component of an adaptor protein complex. Adaptor protein complexes are vesicle coat components involved both in vesicle formation and cargo selection. They control the vesicular transport of proteins in different trafficking pathways. This chain is AP-4 complex subunit epsilon, found in Dictyostelium discoideum (Social amoeba).